The following is a 103-amino-acid chain: MSNQNIRIKLKAFDHRLIDKSALEIVETAKRTGASVRGPIPLPTKKERFTVLTSPHVNKKARDQYELRTYVRLMDVISPTDKTVDALMKLDLAAGVDVAIKLN.

Belongs to the universal ribosomal protein uS10 family. Part of the 30S ribosomal subunit.

In terms of biological role, involved in the binding of tRNA to the ribosomes. The polypeptide is Small ribosomal subunit protein uS10 (Ruthia magnifica subsp. Calyptogena magnifica).